Reading from the N-terminus, the 407-residue chain is tRNA (guanine-N(7)-)-methyltransferase non-catalytic subunit wuho (407 aa).

WD repeat units lie at residues 83–124, 171–210, and 214–252; these read AIEV…ARLL, GHLS…DIHS, and GHKE…ELLI.

This sequence belongs to the WD repeat TRM82 family. Forms a heterodimer with the catalytic subunit Mettl1. Interacts with mei-P26 and weakly interacts with bgcn; required for the function or formation of the mei-P26-bgcn-bam-sxl complex. Interacts with nanos; may be involved in mei-P26-dependent derepression of the BMP signaling pathway. Interacts with Myc; the interaction may be mediated by mei-P26 and may be involved in the regulation of ribosome biogenesis. In testis, it is present at high level in hub cells, a niche for germline stem cells of testis. Ubiquitously expressed in all testicular cells throughout spermatogenesis. Ubiquitously expressed in all germline and somatic cells of the ovary.

It localises to the nucleus. The protein localises to the cytoplasm. It functions in the pathway tRNA modification; N(7)-methylguanine-tRNA biosynthesis. Functionally, required for the Mettl1-dependent formation of N(7)-methylguanine at position 46 (m7G46) in tRNA. In the Mettl1-wuho methyltransferase complex, it is required to stabilize and induce conformational changes of the catalytic subunit. Required for binding of nanos mRNA and repression of translation by the mei-P26-bgcn-bam-sxl complex. May cooperate with mei-P26 and nanos to derepress the BMP signaling pathway. May cooperate with mei-P26 to suppress expression of a subset of microRNAs. May cooperate with mei-P26 to regulate bam expression levels in germline cells during gametogenesis. Required to promote mitosis to meiosis transition during gametogenesis. May regulate germline cell division in part by regulating ribosome biogenesis. The sequence is that of tRNA (guanine-N(7)-)-methyltransferase non-catalytic subunit wuho from Drosophila ananassae (Fruit fly).